Here is a 633-residue protein sequence, read N- to C-terminus: Threonine--tRNA ligase (633 aa).

Residues 1–61 (MINISFPDGS…DNDCRLRILT (61 aa)) enclose the TGS domain. The tract at residues 242-533 (DHRKLGKELD…LIEEYAGRFP (292 aa)) is catalytic. Zn(2+) contacts are provided by Cys333, His384, and His510.

Belongs to the class-II aminoacyl-tRNA synthetase family. As to quaternary structure, homodimer. Zn(2+) serves as cofactor.

It localises to the cytoplasm. The catalysed reaction is tRNA(Thr) + L-threonine + ATP = L-threonyl-tRNA(Thr) + AMP + diphosphate + H(+). Its function is as follows. Catalyzes the attachment of threonine to tRNA(Thr) in a two-step reaction: L-threonine is first activated by ATP to form Thr-AMP and then transferred to the acceptor end of tRNA(Thr). Also edits incorrectly charged L-seryl-tRNA(Thr). The polypeptide is Threonine--tRNA ligase (Rickettsia bellii (strain OSU 85-389)).